The primary structure comprises 680 residues: Pescadillo homolog (680 aa).

The interval L310–D330 is disordered. The 120-residue stretch at Q351–P470 folds into the BRCT domain. Positions A472–K680 are disordered. A coiled-coil region spans residues A496 to K523. The segment covering E497–A518 has biased composition (acidic residues). Residues D519–E529 show a composition bias toward basic and acidic residues. Acidic residues-rich tracts occupy residues A530–V543 and G551–E585. Basic and acidic residues predominate over residues V586–E596. Positions A613 to K680 form a coiled coil. Positions K616–K628 are enriched in basic residues. Residues R629–K639 show a composition bias toward basic and acidic residues.

The protein belongs to the pescadillo family. As to quaternary structure, component of the NOP7 complex, composed of erb1, nop7 and ytm1. The complex is held together by erb1, which interacts with nop7 via its N-terminal domain and with ytm1 via a high-affinity interaction between the seven-bladed beta-propeller domains of the 2 proteins. The NOP7 complex associates with the 66S pre-ribosome.

It localises to the nucleus. Its subcellular location is the nucleolus. It is found in the nucleoplasm. Component of the NOP7 complex, which is required for maturation of the 25S and 5.8S ribosomal RNAs and formation of the 60S ribosome. The protein is Pescadillo homolog (nop7) of Aspergillus clavatus (strain ATCC 1007 / CBS 513.65 / DSM 816 / NCTC 3887 / NRRL 1 / QM 1276 / 107).